Here is a 951-residue protein sequence, read N- to C-terminus: Leucine-rich repeat-containing G-protein coupled receptor 4 (951 aa).

A signal peptide spans 1 to 24 (MPGPLGLLCFLALGLLGSAGPSGA). In terms of domain architecture, LRRNT spans 25–57 (APPLCAAPCSCDGDRRVDCSGKGLTAVPEGLSA). The Extracellular segment spans residues 25–544 (APPLCAAPCS…LLGSWMIRLT (520 aa)). 2 disulfides stabilise this stretch: Cys-29–Cys-35 and Cys-33–Cys-43. 10 LRR repeats span residues 58 to 79 (FTQALDISMNNITQLPEDAFKN), 82 to 103 (FLEELQLAGNDLSFIHPKALSG), 106 to 127 (ELKVLTLQNNQLKTVPSEAIRG), 130 to 151 (ALQSLRLDANHITSVPEDSFEG), 154 to 177 (QLRHLWLDDNSLTEVPVHPLSNLP), 178 to 199 (TLQALTLALNKISSIPDFAFTN), 202 to 223 (SLVVLHLHNNKIRSLSQHCFDG), 226 to 247 (NLETLDLNYNNLGEFPQAIKAL), 249 to 270 (SLKELGFHSNSISVIPDGAFDG), and 273 to 294 (LLRTIHLYDNPLSFVGNSAFHN). N-linked (GlcNAc...) asparagine glycosylation is present at Asn-68. An N-linked (GlcNAc...) asparagine glycan is attached at Asn-199. N-linked (GlcNAc...) asparagine glycosylation is found at Asn-294 and Asn-314. 5 LRR repeats span residues 320–341 (HLESLTLTGTKISSIPNNLCQE), 344–365 (MLRTLDLSYNNIRDLPSFNGCH), 366–387 (ALEEISLQRNQIYQIKEGTFQG), 390–411 (SLRILDLSRNLIHEIHSRAFAT), and 414–435 (PITNLDVSFNELTSFPTEGLNG). Cysteines 339 and 364 form a disulfide. Disulfide bonds link Cys-470-Cys-522 and Cys-471-Cys-476. N-linked (GlcNAc...) asparagine glycosylation is present at Asn-505. Residues 545-565 (VWFIFLVALFFNLLVILTTFA) traverse the membrane as a helical segment. The Cytoplasmic segment spans residues 566–575 (SCTSLPSSKL). Residues 576–596 (FIGLISVSNLFMGIYTGILTF) traverse the membrane as a helical segment. Over 597-620 (LDAVSWGRFAEFGIWWETGSGCKV) the chain is Extracellular. A disulfide bridge connects residues Cys-618 and Cys-693. The helical transmembrane segment at 621 to 641 (AGFLAVFSSESAIFLLMLATV) threads the bilayer. Residues 642–661 (ERSLSAKDIMKNGKSNHLKQ) are Cytoplasmic-facing. A helical transmembrane segment spans residues 662–682 (FRVAALLAFLGATVAGCFPLF). Residues 683–703 (HRGEYSASPLCLPFPTGETPS) are Extracellular-facing. The chain crosses the membrane as a helical span at residues 704 to 724 (LGFTVTLVLLNSLAFLLMAVI). The Cytoplasmic portion of the chain corresponds to 725–756 (YTKLYCNLEKEDLSENSQSSMIKHVAWLIFTN). A helical membrane pass occupies residues 757–777 (CIFFCPVAFFSFAPLITAISI). At 778-783 (SPEIMK) the chain is on the extracellular side. Residues 784-804 (SVTLIFFPLPACLNPVLYVFF) form a helical membrane-spanning segment. At 805–951 (NPKFKEDWKL…YAYNLPRVKD (147 aa)) the chain is on the cytoplasmic side. Position 920 is a phosphoserine (Ser-920).

Belongs to the G-protein coupled receptor 1 family. As to expression, expressed in multiple steroidogenic tissues: placenta, ovary, testis and adrenal. Expressed also in spinal cord, thyroid, stomach, trachea, heart, pancreas, kidney, prostate and spleen.

It is found in the cell membrane. Receptor for R-spondins that potentiates the canonical Wnt signaling pathway and is involved in the formation of various organs. Upon binding to R-spondins (RSPO1, RSPO2, RSPO3 or RSPO4), associates with phosphorylated LRP6 and frizzled receptors that are activated by extracellular Wnt receptors, triggering the canonical Wnt signaling pathway to increase expression of target genes. In contrast to classical G-protein coupled receptors, does not activate heterotrimeric G-proteins to transduce the signal. Its function as activator of the Wnt signaling pathway is required for the development of various organs, including liver, kidney, intestine, bone, reproductive tract and eye. May also act as a receptor for norrin (NDP), such results however require additional confirmation in vivo. Required during spermatogenesis to activate the Wnt signaling pathway in peritubular myoid cells. Required for the maintenance of intestinal stem cells and Paneth cell differentiation in postnatal intestinal crypts. Acts as a regulator of bone formation and remodeling. Involved in kidney development; required for maintaining the ureteric bud in an undifferentiated state. Involved in the development of the anterior segment of the eye. Required during erythropoiesis. Also acts as a negative regulator of innate immunity by inhibiting TLR2/TLR4 associated pattern-recognition and pro-inflammatory cytokine production. Plays an important role in regulating the circadian rhythms of plasma lipids, partially through regulating the rhythmic expression of MTTP. Required for proper development of GnRH neurons (gonadotropin-releasing hormone expressing neurons) that control the release of reproductive hormones from the pituitary gland. This Homo sapiens (Human) protein is Leucine-rich repeat-containing G-protein coupled receptor 4 (LGR4).